The primary structure comprises 336 residues: 4-hydroxythreonine-4-phosphate dehydrogenase (336 aa).

Thr140 contributes to the substrate binding site. Residues His171, His216, and His271 each contribute to the a divalent metal cation site. Substrate contacts are provided by Lys279, Asn288, and Arg297.

Belongs to the PdxA family. Homodimer. It depends on Zn(2+) as a cofactor. Mg(2+) is required as a cofactor. Co(2+) serves as cofactor.

Its subcellular location is the cytoplasm. The catalysed reaction is 4-(phosphooxy)-L-threonine + NAD(+) = 3-amino-2-oxopropyl phosphate + CO2 + NADH. Its pathway is cofactor biosynthesis; pyridoxine 5'-phosphate biosynthesis; pyridoxine 5'-phosphate from D-erythrose 4-phosphate: step 4/5. In terms of biological role, catalyzes the NAD(P)-dependent oxidation of 4-(phosphooxy)-L-threonine (HTP) into 2-amino-3-oxo-4-(phosphooxy)butyric acid which spontaneously decarboxylates to form 3-amino-2-oxopropyl phosphate (AHAP). The sequence is that of 4-hydroxythreonine-4-phosphate dehydrogenase from Erythrobacter litoralis (strain HTCC2594).